Reading from the N-terminus, the 433-residue chain is 23S rRNA (uracil(1939)-C(5))-methyltransferase RlmD (433 aa).

The 59-residue stretch at 10–68 folds into the TRAM domain; the sequence is RTTTRQIITVSVNDLDSFGQGVARHNGKTLFIPGLLPQENAEVTVTEDKKQYARAKVVR. Interaction with RNA stretches follow at residues 23 to 40 and 58 to 63; these read DLDSFGQGVARHNGKTLF and KKQYAR. 4 residues coordinate [4Fe-4S] cluster: C81, C87, C90, and C162. The S-adenosyl-L-methionine site is built by Q265, F294, N299, E315, N342, and D363. C389 functions as the Nucleophile in the catalytic mechanism.

The protein belongs to the class I-like SAM-binding methyltransferase superfamily. RNA M5U methyltransferase family. RlmD subfamily.

It catalyses the reaction uridine(1939) in 23S rRNA + S-adenosyl-L-methionine = 5-methyluridine(1939) in 23S rRNA + S-adenosyl-L-homocysteine + H(+). Catalyzes the formation of 5-methyl-uridine at position 1939 (m5U1939) in 23S rRNA. The protein is 23S rRNA (uracil(1939)-C(5))-methyltransferase RlmD of Escherichia coli (strain K12).